Consider the following 726-residue polypeptide: Probable alpha-galactosidase G (726 aa).

3 N-linked (GlcNAc...) asparagine glycosylation sites follow: Asn-23, Asn-166, and Asn-456. The Nucleophile role is filled by Asp-485. Asp-547 functions as the Proton donor in the catalytic mechanism. N-linked (GlcNAc...) asparagine glycans are attached at residues Asn-657 and Asn-673.

This sequence belongs to the glycosyl hydrolase 36 family. Homotetramer. The cofactor is Mg(2+). It depends on NAD(+) as a cofactor.

It is found in the secreted. The enzyme catalyses Hydrolysis of terminal, non-reducing alpha-D-galactose residues in alpha-D-galactosides, including galactose oligosaccharides, galactomannans and galactolipids.. Hydrolyzes a variety of simple alpha-D-galactoside as well as more complex molecules such as oligosaccharides and polysaccharides. Not active on paranitrophenyl-alpha-galactoside and raffinose. This is Probable alpha-galactosidase G (aglG) from Emericella nidulans (strain FGSC A4 / ATCC 38163 / CBS 112.46 / NRRL 194 / M139) (Aspergillus nidulans).